The primary structure comprises 158 residues: 2-C-methyl-D-erythritol 2,4-cyclodiphosphate synthase (158 aa).

A divalent metal cation is bound by residues Asp9 and His11. 4-CDP-2-C-methyl-D-erythritol 2-phosphate-binding positions include 9-11 and 35-36; these read DVH and HS. His43 is a binding site for a divalent metal cation. Residues 57-59, 62-66, 133-136, Phe140, and Arg143 each bind 4-CDP-2-C-methyl-D-erythritol 2-phosphate; these read DIG, FPDTD, and TTTE.

It belongs to the IspF family. As to quaternary structure, homotrimer. A divalent metal cation serves as cofactor.

The catalysed reaction is 4-CDP-2-C-methyl-D-erythritol 2-phosphate = 2-C-methyl-D-erythritol 2,4-cyclic diphosphate + CMP. The protein operates within isoprenoid biosynthesis; isopentenyl diphosphate biosynthesis via DXP pathway; isopentenyl diphosphate from 1-deoxy-D-xylulose 5-phosphate: step 4/6. In terms of biological role, involved in the biosynthesis of isopentenyl diphosphate (IPP) and dimethylallyl diphosphate (DMAPP), two major building blocks of isoprenoid compounds. Catalyzes the conversion of 4-diphosphocytidyl-2-C-methyl-D-erythritol 2-phosphate (CDP-ME2P) to 2-C-methyl-D-erythritol 2,4-cyclodiphosphate (ME-CPP) with a corresponding release of cytidine 5-monophosphate (CMP). This Haemophilus influenzae (strain PittGG) protein is 2-C-methyl-D-erythritol 2,4-cyclodiphosphate synthase.